A 131-amino-acid chain; its full sequence is Holo-[acyl-carrier-protein] synthase (131 aa).

Mg(2+) is bound by residues aspartate 8 and glutamate 63.

The protein belongs to the P-Pant transferase superfamily. AcpS family. Mg(2+) is required as a cofactor.

Its subcellular location is the cytoplasm. It carries out the reaction apo-[ACP] + CoA = holo-[ACP] + adenosine 3',5'-bisphosphate + H(+). In terms of biological role, transfers the 4'-phosphopantetheine moiety from coenzyme A to a Ser of acyl-carrier-protein. This Shewanella piezotolerans (strain WP3 / JCM 13877) protein is Holo-[acyl-carrier-protein] synthase.